Here is an 895-residue protein sequence, read N- to C-terminus: Alanine--tRNA ligase (895 aa).

Zn(2+)-binding residues include histidine 577, histidine 581, cysteine 680, and histidine 684.

This sequence belongs to the class-II aminoacyl-tRNA synthetase family. It depends on Zn(2+) as a cofactor.

It localises to the cytoplasm. It catalyses the reaction tRNA(Ala) + L-alanine + ATP = L-alanyl-tRNA(Ala) + AMP + diphosphate. In terms of biological role, catalyzes the attachment of alanine to tRNA(Ala) in a two-step reaction: alanine is first activated by ATP to form Ala-AMP and then transferred to the acceptor end of tRNA(Ala). Also edits incorrectly charged Ser-tRNA(Ala) and Gly-tRNA(Ala) via its editing domain. This chain is Alanine--tRNA ligase, found in Kocuria rhizophila (strain ATCC 9341 / DSM 348 / NBRC 103217 / DC2201).